A 324-amino-acid chain; its full sequence is AT-hook motif nuclear-localized protein 24 (324 aa).

The span at 1–12 (MDPVQSHGSQSS) shows a compositional bias: polar residues. Disordered stretches follow at residues 1–122 (MDPV…KPPI) and 262–324 (MQTP…RPPY). The segment covering 24–33 (LHLQQQQQEF) has biased composition (low complexity). Over residues 69-79 (NIDNIANNSGS) the composition is skewed to polar residues. Over residues 88 to 99 (GGSGEGGGGSGG) the composition is skewed to gly residues. Positions 105 to 117 (RRPRGRPAGSKNK) form a DNA-binding region, a.T hook. The PPC domain maps to 129–268 (ANALRTHVME…EDEMQTPVHG (140 aa)). Residues 280–297 (MMGQQLQHQQQAMSGHQG) show a composition bias toward low complexity. Residues 304–318 (GSVQLQQQHDQSYWS) are compositionally biased toward polar residues.

Its subcellular location is the nucleus. In terms of biological role, transcription factor that specifically binds AT-rich DNA sequences related to the nuclear matrix attachment regions (MARs). The chain is AT-hook motif nuclear-localized protein 24 from Arabidopsis thaliana (Mouse-ear cress).